A 1050-amino-acid polypeptide reads, in one-letter code: RecBCD enzyme subunit RecB (1050 aa).

Positions 1–443 (MKPFNIFDSN…LQLVNNYRST (443 aa)) constitute a UvrD-like helicase ATP-binding domain. The DNA-binding and helicase activity, interacts with RecC stretch occupies residues 1 to 766 (MKPFNIFDSN…TNYVKLEGTQ (766 aa)). An ATP-binding site is contributed by 21–28 (ASAGTGKT). Positions 458 to 701 (SPFLEIPGYL…KITTIHSSKG (244 aa)) constitute a UvrD-like helicase C-terminal domain. The nuclease activity, interacts with RecD and RecA stretch occupies residues 814-1050 (PKTIFSFSST…KAIQKCQAYH (237 aa)). Positions 859, 945, and 958 each coordinate Mg(2+). The active-site For nuclease activity is aspartate 958.

This sequence belongs to the helicase family. UvrD subfamily. As to quaternary structure, heterotrimer of RecB, RecC and RecD. All subunits contribute to DNA-binding. Interacts with RecA. It depends on Mg(2+) as a cofactor.

The enzyme catalyses Exonucleolytic cleavage (in the presence of ATP) in either 5'- to 3'- or 3'- to 5'-direction to yield 5'-phosphooligonucleotides.. It catalyses the reaction Couples ATP hydrolysis with the unwinding of duplex DNA by translocating in the 3'-5' direction.. It carries out the reaction ATP + H2O = ADP + phosphate + H(+). A helicase/nuclease that prepares dsDNA breaks (DSB) for recombinational DNA repair. Binds to DSBs and unwinds DNA via a highly rapid and processive ATP-dependent bidirectional helicase activity. Unwinds dsDNA until it encounters a Chi (crossover hotspot instigator) sequence from the 3' direction. Cuts ssDNA a few nucleotides 3' to the Chi site. The properties and activities of the enzyme are changed at Chi. The Chi-altered holoenzyme produces a long 3'-ssDNA overhang and facilitates RecA-binding to the ssDNA for homologous DNA recombination and repair. Holoenzyme degrades any linearized DNA that is unable to undergo homologous recombination. In the holoenzyme this subunit contributes ATPase, 3'-5' helicase, exonuclease activity and loads RecA onto ssDNA. The protein is RecBCD enzyme subunit RecB of Chlamydia pneumoniae (Chlamydophila pneumoniae).